A 408-amino-acid chain; its full sequence is MKEKVILAYSGGLDTTAIIPWLKETYNYDVVCVCADCGQEEELDGLEQRALSCGAAKLYIEDITDEFCDNYIVPCVQAHAVYENKYLLGTSMARPLIAKRLVEIARKEGAVAICHGATGKGNDQIRFELTIKALAPDIKIIAPWRDSNWKLQSREDEIEYCRQHGIHLPFSTDCSYSRDRNIWHISHEGLELEDPANEPNYKHLLVLGCTPEEAPDEPEYVTMTFEKGVPKSVNGKAMKVSDIIRELNRLGAKHGIGIIDIVENRVVGMKSRGVYETPGGTILYEAHQQLEELVLDRDTTTFKMDVGNKFAQVVYEGKWETPLREALQAFVEKTQEYVTGEVKFRLYKGNIIKAGTTSPYSLYNESIASFKTGDMYDHHDADGFINLFGLSLKVRAMKKLENEKKNNK.

ATP-binding positions include 8-16 (AYSGGLDTT) and Ala35. L-citrulline contacts are provided by Tyr86 and Ser91. Gly116 contributes to the ATP binding site. L-aspartate contacts are provided by Thr118, Asn122, and Asp123. Position 122 (Asn122) interacts with L-citrulline. The L-citrulline site is built by Arg126, Ser177, Ser186, Glu263, and Tyr275.

Belongs to the argininosuccinate synthase family. Type 1 subfamily. In terms of assembly, homotetramer.

It is found in the cytoplasm. It carries out the reaction L-citrulline + L-aspartate + ATP = 2-(N(omega)-L-arginino)succinate + AMP + diphosphate + H(+). It functions in the pathway amino-acid biosynthesis; L-arginine biosynthesis; L-arginine from L-ornithine and carbamoyl phosphate: step 2/3. The sequence is that of Argininosuccinate synthase from Lachnospira eligens (strain ATCC 27750 / DSM 3376 / VPI C15-48 / C15-B4) (Eubacterium eligens).